A 46-amino-acid chain; its full sequence is Defensin Tk-AMP-D5 (46 aa).

Intrachain disulfides connect Cys3–Cys46, Cys14–Cys34, Cys20–Cys40, and Cys24–Cys42.

Its function is as follows. Plant defense peptide. In Triticum kiharae (Wheat), this protein is Defensin Tk-AMP-D5.